Reading from the N-terminus, the 243-residue chain is Venom nerve growth factor (243 aa).

Residues 1 to 18 form the signal peptide; it reads MSMLCYTLIIAFLIGIWA. Residues 19–125 constitute a propeptide that is removed on maturation; it reads APKSEDNVPL…TLNRNIWANN (107 aa). Residues 47–66 are compositionally biased toward basic and acidic residues; sequence GLKTSRNTDQHHPTPKKSED. The interval 47-70 is disordered; the sequence is GLKTSRNTDQHHPTPKKSEDQELG. 3 disulfide bridges follow: Cys139/Cys204, Cys182/Cys232, and Cys192/Cys234. An N-linked (GlcNAc...) asparagine glycan is attached at Asn148.

It belongs to the NGF-beta family. Homodimer. In terms of tissue distribution, expressed by the venom gland.

It is found in the secreted. Its function is as follows. Nerve growth factor is important for the development and maintenance of the sympathetic and sensory nervous systems. It stimulates division and differentiation of sympathetic and embryonic sensory neurons as well as basal forebrain cholinergic neurons in the brain. Its relevance in the snake venom is not clear. However, it has been shown to inhibit metalloproteinase-dependent proteolysis of platelet glycoprotein Ib alpha, suggesting a metalloproteinase inhibition to prevent metalloprotease autodigestion and/or protection against prey proteases. Binds a lipid between the two protein chains in the homodimer. The lipid-bound form promotes histamine relase from mouse mast cells, contrary to the lipid-free form. The protein is Venom nerve growth factor of Bungarus multicinctus (Many-banded krait).